Here is a 212-residue protein sequence, read N- to C-terminus: Large ribosomal subunit protein uL3 (212 aa).

An N5-methylglutamine modification is found at Gln153.

Belongs to the universal ribosomal protein uL3 family. As to quaternary structure, part of the 50S ribosomal subunit. Forms a cluster with proteins L14 and L19. Methylated by PrmB.

In terms of biological role, one of the primary rRNA binding proteins, it binds directly near the 3'-end of the 23S rRNA, where it nucleates assembly of the 50S subunit. The protein is Large ribosomal subunit protein uL3 of Shewanella woodyi (strain ATCC 51908 / MS32).